The sequence spans 410 residues: Structural protein ORF142 (410 aa).

2 disordered regions span residues 1–24 (MNQN…HVDT) and 156–197 (PTST…VNIS). Residues 161–188 (DDNDNENRSDDDDDDDDYRNDREEVEDS) show a composition bias toward acidic residues.

It localises to the virion. This chain is Structural protein ORF142, found in Trichoplusia ni ascovirus 2c (TnAV-2c).